The chain runs to 838 residues: Leucine--tRNA ligase (838 aa).

Positions 38-48 match the 'HIGH' region motif; sequence PYPSGKAHVGH. A 'KMSKS' region motif is present at residues 608-612; sequence KMSKS. An ATP-binding site is contributed by K611.

It belongs to the class-I aminoacyl-tRNA synthetase family.

The protein localises to the cytoplasm. It catalyses the reaction tRNA(Leu) + L-leucine + ATP = L-leucyl-tRNA(Leu) + AMP + diphosphate. The sequence is that of Leucine--tRNA ligase from Orientia tsutsugamushi (strain Boryong) (Rickettsia tsutsugamushi).